A 122-amino-acid chain; its full sequence is Large ribosomal subunit protein uL14 (122 aa).

Belongs to the universal ribosomal protein uL14 family. Part of the 50S ribosomal subunit. Forms a cluster with proteins L3 and L19. In the 70S ribosome, L14 and L19 interact and together make contacts with the 16S rRNA in bridges B5 and B8.

Binds to 23S rRNA. Forms part of two intersubunit bridges in the 70S ribosome. This chain is Large ribosomal subunit protein uL14, found in Pseudomonas fluorescens (strain ATCC BAA-477 / NRRL B-23932 / Pf-5).